Reading from the N-terminus, the 110-residue chain is Large ribosomal subunit protein uL22 (110 aa).

It belongs to the universal ribosomal protein uL22 family. Part of the 50S ribosomal subunit.

Its function is as follows. This protein binds specifically to 23S rRNA; its binding is stimulated by other ribosomal proteins, e.g. L4, L17, and L20. It is important during the early stages of 50S assembly. It makes multiple contacts with different domains of the 23S rRNA in the assembled 50S subunit and ribosome. In terms of biological role, the globular domain of the protein is located near the polypeptide exit tunnel on the outside of the subunit, while an extended beta-hairpin is found that lines the wall of the exit tunnel in the center of the 70S ribosome. The chain is Large ribosomal subunit protein uL22 from Stutzerimonas stutzeri (strain A1501) (Pseudomonas stutzeri).